The primary structure comprises 407 residues: Tyrosine--tRNA ligase (407 aa).

Tyr-35 contacts L-tyrosine. Positions Pro-40–His-49 match the 'HIGH' region motif. L-tyrosine-binding residues include Tyr-168 and Gln-172. The short motif at Lys-228–Thr-232 is the 'KMSKS' region element. Lys-231 contributes to the ATP binding site. Positions Asn-341–Val-405 constitute an S4 RNA-binding domain.

This sequence belongs to the class-I aminoacyl-tRNA synthetase family. TyrS type 1 subfamily. In terms of assembly, homodimer.

The protein localises to the cytoplasm. The catalysed reaction is tRNA(Tyr) + L-tyrosine + ATP = L-tyrosyl-tRNA(Tyr) + AMP + diphosphate + H(+). Catalyzes the attachment of tyrosine to tRNA(Tyr) in a two-step reaction: tyrosine is first activated by ATP to form Tyr-AMP and then transferred to the acceptor end of tRNA(Tyr). The polypeptide is Tyrosine--tRNA ligase (Clostridium botulinum (strain 657 / Type Ba4)).